A 362-amino-acid chain; its full sequence is MTVNLLNFNQAALAEYFQGIGEKPFRAKQMMRWMHHFGVSDFGEMTDIAKALREKLAKEAVVAPPSVHLEQISEDGTRKWLIDVGAGNGVETVFIPEDDRGTLCVSSQVGCALDCTFCSTGRQGFNRNLSVSEIIGQLWVANKALGRDPKGDRIISNVVMMGMGEPLANFDNVVAAMNIMLDDSAYGLSRRRVTLSTSGMVPAMDRLREECPVALAVSLHAPNDALRDEIVPINRKYPIAQLMAACQRYLEKAPRDFVTFEYVMLDGVNDTAEHARQLLNIVQDVPCKFNLIPFNPFPNSGYDTSKPDNIRRFRDILMQAGYVVTTRKTRGEDIDAACGQLAGKVQDKTKRSLRRIKVEAVA.

Catalysis depends on Glu91, which acts as the Proton acceptor. The 237-residue stretch at 97–333 folds into the Radical SAM core domain; the sequence is EDDRGTLCVS…VTTRKTRGED (237 aa). Cys104 and Cys338 are joined by a disulfide. Residues Cys111, Cys115, and Cys118 each contribute to the [4Fe-4S] cluster site. S-adenosyl-L-methionine contacts are provided by residues 164-165, Ser196, 218-220, and Asn295; these read GE and SLH. Cys338 serves as the catalytic S-methylcysteine intermediate.

Belongs to the radical SAM superfamily. RlmN family. The cofactor is [4Fe-4S] cluster.

It is found in the cytoplasm. It carries out the reaction adenosine(2503) in 23S rRNA + 2 reduced [2Fe-2S]-[ferredoxin] + 2 S-adenosyl-L-methionine = 2-methyladenosine(2503) in 23S rRNA + 5'-deoxyadenosine + L-methionine + 2 oxidized [2Fe-2S]-[ferredoxin] + S-adenosyl-L-homocysteine. The enzyme catalyses adenosine(37) in tRNA + 2 reduced [2Fe-2S]-[ferredoxin] + 2 S-adenosyl-L-methionine = 2-methyladenosine(37) in tRNA + 5'-deoxyadenosine + L-methionine + 2 oxidized [2Fe-2S]-[ferredoxin] + S-adenosyl-L-homocysteine. Functionally, specifically methylates position 2 of adenine 2503 in 23S rRNA and position 2 of adenine 37 in tRNAs. m2A2503 modification seems to play a crucial role in the proofreading step occurring at the peptidyl transferase center and thus would serve to optimize ribosomal fidelity. This is Dual-specificity RNA methyltransferase RlmN from Methylobacillus flagellatus (strain ATCC 51484 / DSM 6875 / VKM B-1610 / KT).